The following is a 197-amino-acid chain: Probable 26S proteasome non-ATPase regulatory subunit 9 (197 aa).

Residues 75-166 form the PDZ domain; sequence KIVVEMENEN…KIIRVTVIRE (92 aa).

This sequence belongs to the proteasome subunit p27 family.

Functionally, acts as a chaperone during the assembly of the 26S proteasome, specifically of the base subcomplex of the 19S regulatory complex (RC). The chain is Probable 26S proteasome non-ATPase regulatory subunit 9 (psmd-9) from Caenorhabditis elegans.